Consider the following 184-residue polypeptide: ATP synthase subunit b, chloroplastic (184 aa).

The helical transmembrane segment at 27 to 49 (LATNPINLSVVLGVLIFFGKGVL) threads the bilayer.

The protein belongs to the ATPase B chain family. In terms of assembly, F-type ATPases have 2 components, F(1) - the catalytic core - and F(0) - the membrane proton channel. F(1) has five subunits: alpha(3), beta(3), gamma(1), delta(1), epsilon(1). F(0) has four main subunits: a(1), b(1), b'(1) and c(10-14). The alpha and beta chains form an alternating ring which encloses part of the gamma chain. F(1) is attached to F(0) by a central stalk formed by the gamma and epsilon chains, while a peripheral stalk is formed by the delta, b and b' chains.

It localises to the plastid. The protein localises to the chloroplast thylakoid membrane. Its function is as follows. F(1)F(0) ATP synthase produces ATP from ADP in the presence of a proton or sodium gradient. F-type ATPases consist of two structural domains, F(1) containing the extramembraneous catalytic core and F(0) containing the membrane proton channel, linked together by a central stalk and a peripheral stalk. During catalysis, ATP synthesis in the catalytic domain of F(1) is coupled via a rotary mechanism of the central stalk subunits to proton translocation. In terms of biological role, component of the F(0) channel, it forms part of the peripheral stalk, linking F(1) to F(0). In Gossypium barbadense (Sea Island cotton), this protein is ATP synthase subunit b, chloroplastic.